We begin with the raw amino-acid sequence, 444 residues long: Spermatogenesis-associated protein 1 (444 aa).

Residues 145-160 (GTIHRPDSLSLSKDEP) are compositionally biased toward basic and acidic residues. Residues 145–229 (GTIHRPDSLS…DEGEEDDKAT (85 aa)) are disordered. Residues 268–403 (SLLKIEREKI…RKLDTDKMKL (136 aa)) are a coiled coil.

As to quaternary structure, interacts with IFT20.

It localises to the cytoplasmic vesicle. Its subcellular location is the secretory vesicle. The protein resides in the acrosome. The chain is Spermatogenesis-associated protein 1 (Spata1) from Rattus norvegicus (Rat).